A 1176-amino-acid polypeptide reads, in one-letter code: Condensin complex subunit 1 (1176 aa).

Residues Ser464 and Ser475 each carry the phosphoserine modification.

The protein belongs to the CND1 (condensin subunit 1) family. Component of the condensin complex, which contains the SMC2 and SMC4 heterodimer, and three non SMC subunits that probably regulate the complex: BRN1, YCS4 and YCG1/YCS5.

Its subcellular location is the nucleus. It localises to the chromosome. In terms of biological role, regulatory subunit of the condensin complex, a complex required for conversion of interphase chromatin into mitotic-like condense chromosomes. The condensin complex probably introduces positive supercoils into relaxed DNA in the presence of type I topoisomerases and converts nicked DNA into positive knotted forms in the presence of type II topoisomerases. The condensin complex probably also plays a role during interphase. The sequence is that of Condensin complex subunit 1 (YCS4) from Saccharomyces cerevisiae (strain ATCC 204508 / S288c) (Baker's yeast).